A 459-amino-acid chain; its full sequence is UDP-N-acetylmuramoylalanine--D-glutamate ligase (459 aa).

120 to 126 (GSNGKTT) contributes to the ATP binding site.

This sequence belongs to the MurCDEF family.

The protein localises to the cytoplasm. It carries out the reaction UDP-N-acetyl-alpha-D-muramoyl-L-alanine + D-glutamate + ATP = UDP-N-acetyl-alpha-D-muramoyl-L-alanyl-D-glutamate + ADP + phosphate + H(+). It functions in the pathway cell wall biogenesis; peptidoglycan biosynthesis. Functionally, cell wall formation. Catalyzes the addition of glutamate to the nucleotide precursor UDP-N-acetylmuramoyl-L-alanine (UMA). The chain is UDP-N-acetylmuramoylalanine--D-glutamate ligase from Lactobacillus acidophilus (strain ATCC 700396 / NCK56 / N2 / NCFM).